We begin with the raw amino-acid sequence, 149 residues long: NADH-quinone oxidoreductase subunit A (149 aa).

3 helical membrane-spanning segments follow: residues 16–36 (FAVF…GAFF), 68–88 (FYLV…LYAW), and 98–118 (LGFI…FYLV).

Belongs to the complex I subunit 3 family. As to quaternary structure, NDH-1 is composed of 13 different subunits. Subunits NuoA, H, J, K, L, M, N constitute the membrane sector of the complex.

It localises to the cell inner membrane. It carries out the reaction a quinone + NADH + 5 H(+)(in) = a quinol + NAD(+) + 4 H(+)(out). Its function is as follows. NDH-1 shuttles electrons from NADH, via FMN and iron-sulfur (Fe-S) centers, to quinones in the respiratory chain. The immediate electron acceptor for the enzyme in this species is believed to be ubiquinone. Couples the redox reaction to proton translocation (for every two electrons transferred, four hydrogen ions are translocated across the cytoplasmic membrane), and thus conserves the redox energy in a proton gradient. The protein is NADH-quinone oxidoreductase subunit A of Photorhabdus laumondii subsp. laumondii (strain DSM 15139 / CIP 105565 / TT01) (Photorhabdus luminescens subsp. laumondii).